A 423-amino-acid chain; its full sequence is AUGMIN subunit 4 (423 aa).

Positions 267-287 (IEEIERDEAALREDLYSADRK) form a coiled coil.

This sequence belongs to the HAUS4 family. As to quaternary structure, part of the augmin complex composed of 8 subunits. The complex acts on microtubules and interacts with gamma-tubulin in spindles and the phragmoplast.

It is found in the cytoplasm. The protein resides in the cytoskeleton. Its subcellular location is the spindle. The protein localises to the phragmoplast. Functionally, involved in microtubules reorganization during spindle and phragmoplast development. This is AUGMIN subunit 4 (AUG4) from Arabidopsis thaliana (Mouse-ear cress).